The following is a 314-amino-acid chain: NADH-ubiquinone oxidoreductase chain 1 (314 aa).

8 consecutive transmembrane segments (helical) span residues 5-25, 78-98, 105-125, 152-172, 176-196, 227-247, 251-271, and 294-314; these read IMPL…VAFL, FSPV…PYLI, LGVL…MIAG, ALIL…SFYF, YVWF…SCLA, LIFL…VVIF, DIYS…FIWV, and LSLN…SLLF.

Belongs to the complex I subunit 1 family.

It is found in the mitochondrion inner membrane. It catalyses the reaction a ubiquinone + NADH + 5 H(+)(in) = a ubiquinol + NAD(+) + 4 H(+)(out). Its function is as follows. Core subunit of the mitochondrial membrane respiratory chain NADH dehydrogenase (Complex I) that is believed to belong to the minimal assembly required for catalysis. Complex I functions in the transfer of electrons from NADH to the respiratory chain. The immediate electron acceptor for the enzyme is believed to be ubiquinone. This is NADH-ubiquinone oxidoreductase chain 1 (mt:ND1) from Anopheles gambiae (African malaria mosquito).